We begin with the raw amino-acid sequence, 399 residues long: Acetate kinase (399 aa).

Asparagine 8 lines the Mg(2+) pocket. An ATP-binding site is contributed by lysine 15. Arginine 89 contributes to the substrate binding site. Aspartate 146 acts as the Proton donor/acceptor in catalysis. ATP is bound by residues 206-210, 283-285, and 331-335; these read HVGNG, DMR, and GMGEN. Glutamate 383 contributes to the Mg(2+) binding site.

This sequence belongs to the acetokinase family. In terms of assembly, homodimer. Requires Mg(2+) as cofactor. Mn(2+) is required as a cofactor.

Its subcellular location is the cytoplasm. The enzyme catalyses acetate + ATP = acetyl phosphate + ADP. It participates in metabolic intermediate biosynthesis; acetyl-CoA biosynthesis; acetyl-CoA from acetate: step 1/2. Its function is as follows. Catalyzes the formation of acetyl phosphate from acetate and ATP. Can also catalyze the reverse reaction. This is Acetate kinase from Streptococcus equi subsp. zooepidemicus (strain H70).